Consider the following 311-residue polypeptide: Methionyl-tRNA formyltransferase (311 aa).

A (6S)-5,6,7,8-tetrahydrofolate-binding site is contributed by 112-115 (SLLP).

The protein belongs to the Fmt family.

It catalyses the reaction L-methionyl-tRNA(fMet) + (6R)-10-formyltetrahydrofolate = N-formyl-L-methionyl-tRNA(fMet) + (6S)-5,6,7,8-tetrahydrofolate + H(+). In terms of biological role, attaches a formyl group to the free amino group of methionyl-tRNA(fMet). The formyl group appears to play a dual role in the initiator identity of N-formylmethionyl-tRNA by promoting its recognition by IF2 and preventing the misappropriation of this tRNA by the elongation apparatus. The polypeptide is Methionyl-tRNA formyltransferase (Rhizobium meliloti (strain 1021) (Ensifer meliloti)).